A 194-amino-acid chain; its full sequence is Holliday junction branch migration complex subunit RuvA (194 aa).

The domain I stretch occupies residues 1-64 (MIGRLRGILA…EDSVSLYGFL (64 aa)). Residues 65-140 (REGERRLFRD…RAADFSSGAP (76 aa)) form a domain II region. The interval 140–144 (PITGQ) is flexible linker. Positions 145–194 (LGPDAVSEATVALQQLGYKPAEAARMAREAGAEGDEVATVIRKALQAALR) are domain III.

Belongs to the RuvA family. In terms of assembly, homotetramer. Forms an RuvA(8)-RuvB(12)-Holliday junction (HJ) complex. HJ DNA is sandwiched between 2 RuvA tetramers; dsDNA enters through RuvA and exits via RuvB. An RuvB hexamer assembles on each DNA strand where it exits the tetramer. Each RuvB hexamer is contacted by two RuvA subunits (via domain III) on 2 adjacent RuvB subunits; this complex drives branch migration. In the full resolvosome a probable DNA-RuvA(4)-RuvB(12)-RuvC(2) complex forms which resolves the HJ.

It is found in the cytoplasm. The RuvA-RuvB-RuvC complex processes Holliday junction (HJ) DNA during genetic recombination and DNA repair, while the RuvA-RuvB complex plays an important role in the rescue of blocked DNA replication forks via replication fork reversal (RFR). RuvA specifically binds to HJ cruciform DNA, conferring on it an open structure. The RuvB hexamer acts as an ATP-dependent pump, pulling dsDNA into and through the RuvAB complex. HJ branch migration allows RuvC to scan DNA until it finds its consensus sequence, where it cleaves and resolves the cruciform DNA. In Xanthomonas campestris pv. campestris (strain 8004), this protein is Holliday junction branch migration complex subunit RuvA.